Reading from the N-terminus, the 490-residue chain is Cytochrome P450 90D2 (490 aa).

Residues 4–24 form a helical membrane-spanning segment; it reads AAAGWAAPAFAVAAVVIWVVL. Residue C437 coordinates heme.

The protein belongs to the cytochrome P450 family. Heme is required as a cofactor.

It is found in the membrane. The catalysed reaction is 6-deoxoteasterone + reduced [NADPH--hemoprotein reductase] + O2 = 3-dehydro-6-deoxoteasterone + oxidized [NADPH--hemoprotein reductase] + 2 H2O + H(+). The protein operates within plant hormone biosynthesis; brassinosteroid biosynthesis. Functionally, catalyzes the C6-oxidation step in brassinosteroids biosynthesis. May convert 6-deoxoteasterone (6-deoxoTE) to 3-dehydro-6-deoxoteasterone (6-deoxo3DT, 6-deoxo3DHT), and teasterone (TE) to 3-dehydroteasterone (3DT, 3-DHT). Involved in the elongation of leaf sheaths and stems. This chain is Cytochrome P450 90D2, found in Oryza sativa subsp. indica (Rice).